The primary structure comprises 149 residues: Calmodulin (149 aa).

The residue at position 2 (Ala2) is an N-acetylalanine. EF-hand domains lie at 8-43 (EQIAEFKEAFALFDKDGDGTITTKELGTVMRSLGQN), 44-79 (PTEAELQDMINEVDADGNGTIDFPEFLSLMARKMKE), 81-116 (DSEEELIEAFKVFDRDGNGLISAAELRHVMTNLGEK), and 117-149 (LTDDEVDEMIREADIDGDGHINYEEFVRMMVSK). Lys14 bears the N6,N6-dimethyllysine mark. Asp21, Asp23, Asp25, Thr27, Glu32, Asp57, Asp59, Asn61, Thr63, Glu68, Asp94, Asp96, Asn98, and Glu105 together coordinate Ca(2+). Lys116 is subject to N6,N6,N6-trimethyllysine. Residues Asp130, Asp132, Asp134, His136, and Glu141 each contribute to the Ca(2+) site.

This sequence belongs to the calmodulin family. The pantophobiac mutant CAM2 is undermethylated on Lys-116.

Functionally, calmodulin mediates the control of a large number of enzymes, ion channels and other proteins by Ca(2+). Among the enzymes to be stimulated by the calmodulin-Ca(2+) complex are a number of protein kinases and phosphatases. The chain is Calmodulin (CAM) from Paramecium tetraurelia.